The sequence spans 616 residues: Spastin (616 aa).

The segment at 1–44 is disordered; sequence MNSPGGRGKKKGSGGPSSPVPPRPPPPCLASSRPAPRPAPPPQS. The required for nuclear localization stretch occupies residues 1–50; the sequence is MNSPGGRGKKKGSGGPSSPVPPRPPPPCLASSRPAPRPAPPPQSPHKRNL. Over 1–56 the chain is Cytoplasmic; sequence MNSPGGRGKKKGSGGPSSPVPPRPPPPCLASSRPAPRPAPPPQSPHKRNLYYFSYP. Residues 1–80 are required for interaction with ATL1; that stretch reads MNSPGGRGKK…LGLLFVWLCQ (80 aa). The tract at residues 1 to 194 is required for midbody localization; the sequence is MNSPGGRGKK…LVMAKDRLQL (194 aa). The interval 1–300 is required for interaction with RTN1; sequence MNSPGGRGKK…STPKTNRTNK (300 aa). The Nuclear localization signal signature appears at 4–11; it reads PGGRGKKK. Composition is skewed to pro residues over residues 18 to 28 and 35 to 44; these read SPVPPRPPPPC and APRPAPPPQS. Residues 50–87 are required for interaction with SSNA1 and microtubules; sequence LYYFSYPLFLGFALLRLVAFHLGLLFVWLCQRFSRALM. An intramembrane region (helical) is located at residues 57–77; that stretch reads LFLGFALLRLVAFHLGLLFVW. The Nuclear export signal motif lies at 59–67; that stretch reads LGFALLRLV. Residues 78-616 are Cytoplasmic-facing; the sequence is LCQRFSRALM…WNKDFGDTTV (539 aa). Residues 112-196 form a sufficient for interaction with CHMP1B region; sequence EVERVRAFHK…MAKDRLQLLE (85 aa). The required for interaction with microtubules stretch occupies residues 114-200; it reads ERVRAFHKQA…RLQLLEKLQP (87 aa). One can recognise an MIT domain in the interval 120-195; sequence HKQAFEYISV…VMAKDRLQLL (76 aa). A disordered region spans residues 223–266; the sequence is GHLQSESGAVPKRKDPLTHPSNSLPRSKAIMKTGSTGLSGHHRA. Positions 226–328 are sufficient for interaction with microtubules; it reads QSESGAVPKR…NVDSNLANFI (103 aa). The tract at residues 228 to 616 is sufficient for microtubule severing; that stretch reads ESGAVPKRKD…WNKDFGDTTV (389 aa). Phosphoserine occurs at positions 245 and 268. The tract at residues 270–328 is required for interaction with microtubules and microtubule severing; the sequence is SGLSIVSGMRQGPGPTTATHKSTPKTNRTNKPSTPTTAPRKKKDLKNFRNVDSNLANFI. The tract at residues 278–311 is disordered; that stretch reads MRQGPGPTTATHKSTPKTNRTNKPSTPTTAPRKK. The segment covering 283-306 has biased composition (polar residues); that stretch reads GPTTATHKSTPKTNRTNKPSTPTT. A Phosphothreonine modification is found at Thr306. A Nuclear localization signal motif is present at residues 309–312; sequence RKKK. The required for interaction with microtubules stretch occupies residues 310 to 312; that stretch reads KKK. 382-389 contacts ATP; that stretch reads GPPGNGKT. Ser597 carries the phosphoserine modification.

This sequence belongs to the AAA ATPase family. Spastin subfamily. Homohexamer. Mostly monomeric, but assembles into hexameric structure for short periods of time. Oligomerization seems to be a prerequisite for catalytic activity. Binding to ATP in a cleft between two adjacent subunits stabilizes the homohexameric form. Binds to microtubules at least in part via the alpha-tubulin and beta-tubulin tails. The hexamer adopts a ring conformation through which microtubules pass prior to being severed. Does not interact strongly with tubulin heterodimers. Interacts (via MIT domain) with CHMP1B; the interaction is direct. Interacts with SSNA1. Interacts with ATL1. Interacts with RTN1. Interacts with ZFYVE27. Interacts with REEP1. Interacts (via MIT domain) with IST1.

It localises to the membrane. Its subcellular location is the endoplasmic reticulum. The protein localises to the midbody. The protein resides in the cytoplasm. It is found in the cytoskeleton. It localises to the microtubule organizing center. Its subcellular location is the centrosome. The protein localises to the perinuclear region. The protein resides in the nucleus. It is found in the spindle. It localises to the cell projection. Its subcellular location is the axon. It carries out the reaction n ATP + n H2O + a microtubule = n ADP + n phosphate + (n+1) alpha/beta tubulin heterodimers.. With respect to regulation, allosteric enzyme with a cooperative mechanism; at least two neighbor subunits influence each other strongly in spastin hexamers. Microtubule binding promotes cooperative interactions among spastin subunits. Its function is as follows. ATP-dependent microtubule severing protein that specifically recognizes and cuts microtubules that are polyglutamylated. Preferentially recognizes and acts on microtubules decorated with short polyglutamate tails: severing activity increases as the number of glutamates per tubulin rises from one to eight, but decreases beyond this glutamylation threshold. Severing activity is not dependent on tubulin acetylation or detyrosination. Microtubule severing promotes reorganization of cellular microtubule arrays and the release of microtubules from the centrosome following nucleation. It is critical for the biogenesis and maintenance of complex microtubule arrays in axons, spindles and cilia. SPAST is involved in abscission step of cytokinesis and nuclear envelope reassembly during anaphase in cooperation with the ESCRT-III complex. Recruited at the midbody, probably by IST1, and participates in membrane fission during abscission together with the ESCRT-III complex. Recruited to the nuclear membrane by IST1 and mediates microtubule severing, promoting nuclear envelope sealing and mitotic spindle disassembly during late anaphase. Required for membrane traffic from the endoplasmic reticulum (ER) to the Golgi and endosome recycling. Recruited by IST1 to endosomes and regulates early endosomal tubulation and recycling by mediating microtubule severing. Probably plays a role in axon growth and the formation of axonal branches. This is Spastin from Sus scrofa (Pig).